A 253-amino-acid chain; its full sequence is Major prion protein (253 aa).

Residues 1–22 form the signal peptide; sequence MANLGCWMLVLFVATWSDLGLC. Residues 23–38 are interaction with ADGRG6; it reads KKRPKPGGWNTGGSRY. Residues 23–230 form an interaction with GRB2, ERI3 and SYN1 region; the sequence is KKRPKPGGWN…ESQAYYQRGS (208 aa). The segment at 26–108 is disordered; that stretch reads PKPGGWNTGG…WNKPSKPKTS (83 aa). Tandem repeats lie at residues 51–59, 60–67, 68–75, 76–83, and 84–91. The segment at 51-91 is 5 X 8 AA tandem repeats of P-H-G-G-G-W-G-Q; the sequence is PQGGGGWGQPHGGGWGQPHGGGWGQPHGGGWGQPHGGGWGQ. Over residues 52 to 95 the composition is skewed to gly residues; that stretch reads QGGGGWGQPHGGGWGQPHGGGWGQPHGGGWGQPHGGGWGQGGGT. 12 residues coordinate Cu(2+): histidine 61, glycine 62, glycine 63, histidine 69, glycine 70, glycine 71, histidine 77, glycine 78, glycine 79, histidine 85, glycine 86, and glycine 87. Cysteine 179 and cysteine 214 form a disulfide bridge. Residues asparagine 181 and asparagine 197 are each glycosylated (N-linked (GlcNAc...) asparagine). A lipid anchor (GPI-anchor amidated serine) is attached at serine 230. A propeptide spans 231 to 253 (removed in mature form); sequence SMVLFSSPPVILLISFLIFLIVG.

The protein belongs to the prion family. In terms of assembly, monomer and homodimer. Has a tendency to aggregate into amyloid fibrils containing a cross-beta spine, formed by a steric zipper of superposed beta-strands. Soluble oligomers may represent an intermediate stage on the path to fibril formation. Copper binding may promote oligomerization. Interacts with GRB2, APP, ERI3/PRNPIP and SYN1. Mislocalized cytosolically exposed PrP interacts with MGRN1; this interaction alters MGRN1 subcellular location and causes lysosomal enlargement. Interacts with APP. Interacts with KIAA1191. Interacts with ADGRG6.

The protein resides in the cell membrane. It is found in the golgi apparatus. Functionally, its primary physiological function is unclear. May play a role in neuronal development and synaptic plasticity. May be required for neuronal myelin sheath maintenance. May promote myelin homeostasis through acting as an agonist for ADGRG6 receptor. May play a role in iron uptake and iron homeostasis. Soluble oligomers are toxic to cultured neuroblastoma cells and induce apoptosis (in vitro). Association with GPC1 (via its heparan sulfate chains) targets PRNP to lipid rafts. Also provides Cu(2+) or Zn(2+) for the ascorbate-mediated GPC1 deaminase degradation of its heparan sulfate side chains. The sequence is that of Major prion protein (PRNP) from Colobus guereza (Mantled guereza).